Reading from the N-terminus, the 367-residue chain is Glutamate 5-kinase (367 aa).

K10 contacts ATP. Substrate contacts are provided by S50, D137, and N149. ATP-binding positions include 169-170 (TD) and 211-217 (TGGMSTK). Residues 275 to 353 (AGEITVDEGA…QQIDAILGYE (79 aa)) form the PUA domain.

This sequence belongs to the glutamate 5-kinase family.

It localises to the cytoplasm. It carries out the reaction L-glutamate + ATP = L-glutamyl 5-phosphate + ADP. It participates in amino-acid biosynthesis; L-proline biosynthesis; L-glutamate 5-semialdehyde from L-glutamate: step 1/2. Catalyzes the transfer of a phosphate group to glutamate to form L-glutamate 5-phosphate. The polypeptide is Glutamate 5-kinase (Salmonella paratyphi A (strain ATCC 9150 / SARB42)).